A 90-amino-acid polypeptide reads, in one-letter code: MSTTANPLLAEINKGTDLKHAETQDKSAPIIENVPIKKNDHSSLLGEVEKGAQLKHVETQDRSAPVTEGATVKSNNHSALLGEIKSKAQE.

WH2 domains are found at residues 4-21 and 40-57; these read TANP…LKHA and DHSS…LKHV. Residues 57 to 90 are disordered; it reads VETQDRSAPVTEGATVKSNNHSALLGEIKSKAQE.

Monomer.

Its function is as follows. Is able to bind two actin monomers at high concentrations of G-actin. Inhibits actin polymerization by sequestering G-actin and stabilizing actin dimers. The chain is Actobindin-B/C (abnB) from Dictyostelium discoideum (Social amoeba).